An 852-amino-acid chain; its full sequence is Lon protease homolog 2, peroxisomal (852 aa).

Serine 2 carries the N-acetylserine modification. In terms of domain architecture, Lon N-terminal spans 13–222 (LPLLLTHESV…MTIPLLVRQI (210 aa)). Position 375-382 (375-382 (GPPGVGKT)) interacts with ATP. The Lon proteolytic domain maps to 651-837 (LSQPGVAIGL…DEVLNAAFDG (187 aa)). Catalysis depends on residues serine 743 and lysine 786. The short motif at 850–852 (SKL) is the Microbody targeting signal element.

Belongs to the peptidase S16 family. Interacts with PEX5. Interacts with TYSND1. May interact with enzymes involved in beta-oxidation of fatty acids, including ACOX1/AOX.

It is found in the peroxisome matrix. It catalyses the reaction Hydrolysis of proteins in presence of ATP.. Its function is as follows. ATP-dependent serine protease that mediates the selective degradation of misfolded and unassembled polypeptides in the peroxisomal matrix. Necessary for type 2 peroxisome targeting signal (PTS2)-containing protein processing and facilitates peroxisome matrix protein import. May indirectly regulate peroxisomal fatty acid beta-oxidation through degradation of the self-processed forms of TYSND1. The sequence is that of Lon protease homolog 2, peroxisomal (Lonp2) from Mus musculus (Mouse).